The following is a 172-amino-acid chain: MYDAFTRVVSQRDARGEFLSSAQIDALSKLVSDSNKRIDTVNRITGNASAIVTNAARSLFAEQPQLIAPGGNAYTSRRMAACLRDMEIILRYVTYAIFAGDASVLEDRCLNGLRETYLALGTPGSSVAVGVQKMKDEALAIANDTNGITLGDCSALMAEVATYFDRAAAAVA.

Asn-72 bears the N4-methylasparagine mark. (2R,3E)-phycocyanobilin contacts are provided by Cys-82 and Cys-153.

This sequence belongs to the phycobiliprotein family. As to quaternary structure, heterodimer of an alpha and a beta subunit, which further assembles into trimers and the trimers into hexamers. Post-translationally, contains two covalently linked bilin chromophores.

It localises to the cellular thylakoid membrane. In terms of biological role, light-harvesting photosynthetic bile pigment-protein from the phycobiliprotein complex (phycobilisome, PBS). Phycocyanin is the major phycobiliprotein in the PBS rod. The chain is C-phycocyanin beta subunit (cpcB) from Synechocystis sp. (strain PCC 6701).